The primary structure comprises 341 residues: Heterogeneous nuclear ribonucleoproteins A2/B1 (341 aa).

RRM domains are found at residues 9–92 and 100–179; these read RKLF…ESGK and KKLF…LSRQ. Lys10 is covalently cross-linked (Glycyl lysine isopeptide (Lys-Gly) (interchain with G-Cter in SUMO2)). Ser17 carries the phosphoserine modification. Arg26 carries the post-translational modification Omega-N-methylarginine. A Phosphoserine modification is found at Ser73. An N6,N6-dimethyllysine; alternate modification is found at Lys92. Lys92 is covalently cross-linked (Glycyl lysine isopeptide (Lys-Gly) (interchain with G-Cter in SUMO2); alternate). Residues Lys100, Lys108, and Lys125 each participate in a glycyl lysine isopeptide (Lys-Gly) (interchain with G-Cter in SUMO2) cross-link. Thr128 bears the Phosphothreonine mark. Residue Ser137 is modified to Phosphoserine. Residue Lys140 forms a Glycyl lysine isopeptide (Lys-Gly) (interchain with G-Cter in SUMO2) linkage. Position 147 is a phosphothreonine (Thr147). Residues Lys156 and Lys161 each participate in a glycyl lysine isopeptide (Lys-Gly) (interchain with G-Cter in SUMO2); alternate cross-link. Lys156 and Lys161 each carry N6-acetyllysine; alternate. Position 164 is a phosphothreonine (Thr164). Lys174 is covalently cross-linked (Glycyl lysine isopeptide (Lys-Gly) (interchain with G-Cter in SUMO2)). 2 positions are modified to phosphoserine: Ser177 and Ser189. The disordered stretch occupies residues 181-341; sequence MQEVQSSRSG…SGGYGGRSRY (161 aa). Residues 190–211 show a composition bias toward gly residues; it reads GRGGNFGFGDSRGGGGNFGPGP. Arg191 bears the Asymmetric dimethylarginine; alternate mark. At Arg191 the chain carries Dimethylated arginine; alternate. Arg191 bears the Omega-N-methylarginine; alternate mark. Ser200 is subject to Phosphoserine. The residue at position 201 (Arg201) is an Asymmetric dimethylarginine; alternate. Dimethylated arginine; alternate is present on Arg201. Residue Arg201 is modified to Omega-N-methylarginine; alternate. Phosphoserine is present on Ser213. Arg216 bears the Omega-N-methylarginine mark. Ser219 and Ser224 each carry phosphoserine. Omega-N-methylarginine is present on Arg226. Residue Ser247 is modified to Phosphoserine. The residue at position 254 (Arg254) is an Asymmetric dimethylarginine; alternate. Arg254 carries the post-translational modification Omega-N-methylarginine; alternate. A nuclear targeting sequence region spans residues 296–335; sequence QQPSNYGPMKSGNFGGSRNMGGPYGGGNYGPGGSGGSGGY. Residues 308 to 341 are compositionally biased toward gly residues; sequence NFGGSRNMGGPYGGGNYGPGGSGGSGGYGGRSRY. Ser312 is subject to Phosphoserine. Residue Arg313 is modified to Omega-N-methylarginine. A Phosphotyrosine modification is found at Tyr319. Ser329 and Ser332 each carry phosphoserine. Residue Tyr335 is modified to Phosphotyrosine. Omega-N-methylarginine is present on Arg338.

As to quaternary structure, identified in the spliceosome C complex. Identified in a IGF2BP1-dependent mRNP granule complex containing untranslated mRNAs. Interacts with IGF2BP1. Interacts with C9orf72. Interacts with DGCR8. Interacts with TARDBP. Interacts with CKAP5. Interacts with PPIA/CYPA. Interacts (via C-terminus) with FAM76B; the interaction results in retention of HNRNPA2B1 in the nucleus and inhibition of the NF-kappa-B-mediated inflammatory pathway. Interacts with NF-kappa-B inhibitors NFKBIA and NFKBIE; the interaction may be mediated by the RRM2 domain of HNRNPA2B1, and HNRNPA2B1 may interact simultaneously with FAM76B and either NFKBIA or NFKBIE to form a complex. Post-translationally, sumoylated in exosomes, promoting miRNAs-binding. Asymmetric dimethylation at Arg-254 constitutes the major methylation site. According to a report, methylation affects subcellular location and promotes nuclear localization. According to another report, methylation at Arg-254 does not influence nucleocytoplasmic shuttling.

The protein resides in the nucleus. The protein localises to the nucleoplasm. Its subcellular location is the cytoplasmic granule. It localises to the secreted. It is found in the extracellular exosome. Functionally, heterogeneous nuclear ribonucleoprotein (hnRNP) that associates with nascent pre-mRNAs, packaging them into hnRNP particles. The hnRNP particle arrangement on nascent hnRNA is non-random and sequence-dependent and serves to condense and stabilize the transcripts and minimize tangling and knotting. Packaging plays a role in various processes such as transcription, pre-mRNA processing, RNA nuclear export, subcellular location, mRNA translation and stability of mature mRNAs. Forms hnRNP particles with at least 20 other different hnRNP and heterogeneous nuclear RNA in the nucleus. Involved in transport of specific mRNAs to the cytoplasm in oligodendrocytes and neurons: acts by specifically recognizing and binding the A2RE (21 nucleotide hnRNP A2 response element) or the A2RE11 (derivative 11 nucleotide oligonucleotide) sequence motifs present on some mRNAs, and promotes their transport to the cytoplasm. Specifically binds single-stranded telomeric DNA sequences, protecting telomeric DNA repeat against endonuclease digestion. Also binds other RNA molecules, such as primary miRNA (pri-miRNAs): acts as a nuclear 'reader' of the N6-methyladenosine (m6A) mark by specifically recognizing and binding a subset of nuclear m6A-containing pri-miRNAs. Binding to m6A-containing pri-miRNAs promotes pri-miRNA processing by enhancing binding of DGCR8 to pri-miRNA transcripts. Involved in miRNA sorting into exosomes following sumoylation, possibly by binding (m6A)-containing pre-miRNAs. Acts as a regulator of efficiency of mRNA splicing, possibly by binding to m6A-containing pre-mRNAs. Plays a role in the splicing of pyruvate kinase PKM by binding repressively to sequences flanking PKM exon 9, inhibiting exon 9 inclusion and resulting in exon 10 inclusion and production of the PKM M2 isoform. This chain is Heterogeneous nuclear ribonucleoproteins A2/B1 (HNRNPA2B1), found in Saguinus oedipus (Cotton-top tamarin).